We begin with the raw amino-acid sequence, 308 residues long: Shikimate kinase 1, chloroplastic (308 aa).

Residues 1–62 (MEAGVGLALQ…RGSKPVAPLR (62 aa)) constitute a chloroplast transit peptide. 103–110 (GMMGSGKS) provides a ligand contact to ATP. A Mg(2+)-binding site is contributed by serine 110. The substrate site is built by aspartate 128, arginine 153, and glycine 175. Arginine 214 is an ATP binding site.

It belongs to the shikimate kinase family. Mg(2+) is required as a cofactor. Expressed in panicles.

The protein localises to the plastid. The protein resides in the chloroplast. The enzyme catalyses shikimate + ATP = 3-phosphoshikimate + ADP + H(+). The protein operates within metabolic intermediate biosynthesis; chorismate biosynthesis; chorismate from D-erythrose 4-phosphate and phosphoenolpyruvate: step 5/7. In terms of biological role, catalyzes the specific phosphorylation of the 3-hydroxyl group of shikimic acid using ATP as a cosubstrate. In Oryza sativa subsp. japonica (Rice), this protein is Shikimate kinase 1, chloroplastic (SK1).